We begin with the raw amino-acid sequence, 335 residues long: UPF0353 protein MLBr01808 (335 aa).

2 consecutive transmembrane segments (helical) span residues 18–38 (WFFL…MMQV) and 67–87 (VPAI…AGPT). The region spanning 98–294 (VVMLVIDVSQ…AELKAVYASL (197 aa)) is the VWFA domain. Residues 309-329 (AGWLRLGVLVLALAALTALLI) traverse the membrane as a helical segment.

The protein belongs to the UPF0353 family.

The protein localises to the cell membrane. This is UPF0353 protein MLBr01808 from Mycobacterium leprae (strain Br4923).